A 316-amino-acid chain; its full sequence is Ribosomal RNA small subunit methyltransferase H (316 aa).

S-adenosyl-L-methionine is bound by residues 35-37 (SGH), Asp55, Phe84, Asp105, and Gln112.

Belongs to the methyltransferase superfamily. RsmH family.

It localises to the cytoplasm. It carries out the reaction cytidine(1402) in 16S rRNA + S-adenosyl-L-methionine = N(4)-methylcytidine(1402) in 16S rRNA + S-adenosyl-L-homocysteine + H(+). Specifically methylates the N4 position of cytidine in position 1402 (C1402) of 16S rRNA. The sequence is that of Ribosomal RNA small subunit methyltransferase H from Streptococcus dysgalactiae subsp. equisimilis (strain GGS_124).